The primary structure comprises 625 residues: Phosphomethylpyrimidine synthase (625 aa).

Substrate is bound by residues N237, M266, Y295, H331, 351–353 (SRG), 392–395 (DGLR), and E431. Residue H435 coordinates Zn(2+). Position 458 (Y458) interacts with substrate. Position 499 (H499) interacts with Zn(2+). 3 residues coordinate [4Fe-4S] cluster: C579, C582, and C587.

It belongs to the ThiC family. In terms of assembly, homodimer. The cofactor is [4Fe-4S] cluster.

The enzyme catalyses 5-amino-1-(5-phospho-beta-D-ribosyl)imidazole + S-adenosyl-L-methionine = 4-amino-2-methyl-5-(phosphooxymethyl)pyrimidine + CO + 5'-deoxyadenosine + formate + L-methionine + 3 H(+). The protein operates within cofactor biosynthesis; thiamine diphosphate biosynthesis. Its function is as follows. Catalyzes the synthesis of the hydroxymethylpyrimidine phosphate (HMP-P) moiety of thiamine from aminoimidazole ribotide (AIR) in a radical S-adenosyl-L-methionine (SAM)-dependent reaction. The protein is Phosphomethylpyrimidine synthase of Cupriavidus metallidurans (strain ATCC 43123 / DSM 2839 / NBRC 102507 / CH34) (Ralstonia metallidurans).